A 127-amino-acid chain; its full sequence is Large ribosomal subunit protein bL19 (127 aa).

It belongs to the bacterial ribosomal protein bL19 family.

In terms of biological role, this protein is located at the 30S-50S ribosomal subunit interface and may play a role in the structure and function of the aminoacyl-tRNA binding site. This chain is Large ribosomal subunit protein bL19, found in Cupriavidus pinatubonensis (strain JMP 134 / LMG 1197) (Cupriavidus necator (strain JMP 134)).